Here is a 103-residue protein sequence, read N- to C-terminus: Phosphoribosyl-ATP pyrophosphatase (103 aa).

This sequence belongs to the PRA-PH family.

It localises to the cytoplasm. The enzyme catalyses 1-(5-phospho-beta-D-ribosyl)-ATP + H2O = 1-(5-phospho-beta-D-ribosyl)-5'-AMP + diphosphate + H(+). It participates in amino-acid biosynthesis; L-histidine biosynthesis; L-histidine from 5-phospho-alpha-D-ribose 1-diphosphate: step 2/9. The protein is Phosphoribosyl-ATP pyrophosphatase of Cereibacter sphaeroides (strain ATCC 17029 / ATH 2.4.9) (Rhodobacter sphaeroides).